Consider the following 401-residue polypeptide: 8-amino-7-oxononanoate synthase (401 aa).

Substrate is bound at residue R19. 106–107 (GY) is a pyridoxal 5'-phosphate binding site. H131 contributes to the substrate binding site. Positions 176, 204, and 233 each coordinate pyridoxal 5'-phosphate. At K236 the chain carries N6-(pyridoxal phosphate)lysine. T350 serves as a coordination point for substrate.

The protein belongs to the class-II pyridoxal-phosphate-dependent aminotransferase family. BioF subfamily. As to quaternary structure, homodimer. Requires pyridoxal 5'-phosphate as cofactor.

The catalysed reaction is 6-carboxyhexanoyl-[ACP] + L-alanine + H(+) = (8S)-8-amino-7-oxononanoate + holo-[ACP] + CO2. It participates in cofactor biosynthesis; biotin biosynthesis. Functionally, catalyzes the decarboxylative condensation of pimeloyl-[acyl-carrier protein] and L-alanine to produce 8-amino-7-oxononanoate (AON), [acyl-carrier protein], and carbon dioxide. The polypeptide is 8-amino-7-oxononanoate synthase (Pseudomonas aeruginosa (strain LESB58)).